The sequence spans 522 residues: Lysine--tRNA ligase (522 aa).

The short motif at 44-52 (PSGLPHIGT) is the 'HIGH' region element. The short motif at 290–294 (KISKS) is the 'KMSKS' region element. An ATP-binding site is contributed by Lys-293.

This sequence belongs to the class-I aminoacyl-tRNA synthetase family.

Its subcellular location is the cytoplasm. It catalyses the reaction tRNA(Lys) + L-lysine + ATP = L-lysyl-tRNA(Lys) + AMP + diphosphate. The protein is Lysine--tRNA ligase of Rickettsia bellii (strain OSU 85-389).